A 207-amino-acid polypeptide reads, in one-letter code: Galactoside O-acetyltransferase (207 aa).

Asn87 contacts acetyl-CoA. The active-site Proton donor/acceptor is His117. Residues Ala144, Ala162, 167-168, and Arg185 contribute to the acetyl-CoA site; that span reads TK.

The protein belongs to the transferase hexapeptide repeat family. Homotrimer.

It is found in the cytoplasm. It carries out the reaction a beta-D-galactoside + acetyl-CoA = a 6-acetyl-beta-D-galactoside + CoA. The chain is Galactoside O-acetyltransferase (lacA) from Lactococcus lactis subsp. lactis (strain IL1403) (Streptococcus lactis).